We begin with the raw amino-acid sequence, 167 residues long: Protein FimG (167 aa).

The signal sequence occupies residues 1–23 (MKWCKRGYVLAAILALASATIQA). A disulfide bridge links Cys-39 with Cys-77.

The protein belongs to the fimbrial protein family.

It is found in the fimbrium. Its function is as follows. Involved in regulation of length and mediation of adhesion of type 1 fimbriae (but not necessary for the production of fimbriae). Involved in the integration of FimH in the fimbriae. In Escherichia coli (strain K12), this protein is Protein FimG (fimG).